The chain runs to 649 residues: Putative cystathionine gamma-synthase YML082W (649 aa).

The segment at 242–273 (NEANHGEDHDGGISGEVDSQEEPHNGLVSTIP) is disordered. Phosphoserine is present on serine 287. Lysine 451 is modified (N6-(pyridoxal phosphate)lysine).

This sequence belongs to the trans-sulfuration enzymes family. MET7 subfamily. It depends on pyridoxal 5'-phosphate as a cofactor.

The catalysed reaction is O-succinyl-L-homoserine + L-cysteine = L,L-cystathionine + succinate + H(+). It participates in amino-acid biosynthesis; L-methionine biosynthesis via de novo pathway; L-cystathionine from O-succinyl-L-homoserine: step 1/1. Its function is as follows. Catalyzes the formation of L-cystathionine from O-succinyl-L-homoserine (OSHS) and L-cysteine, via a gamma-replacement reaction. In the absence of thiol, catalyzes gamma-elimination to form 2-oxobutanoate, succinate and ammonia. This Saccharomyces cerevisiae (strain ATCC 204508 / S288c) (Baker's yeast) protein is Putative cystathionine gamma-synthase YML082W.